Here is a 215-residue protein sequence, read N- to C-terminus: Probable phosphoglycerate mutase GpmB (215 aa).

Substrate-binding positions include 8 to 15 (RHGETQWN), 21 to 22 (QG), Arg-58, Arg-60, 82 to 85 (ELNM), 104 to 105 (RR), and 151 to 152 (GI). His-9 serves as the catalytic Tele-phosphohistidine intermediate. The active-site Proton donor/acceptor is the Glu-82.

The protein belongs to the phosphoglycerate mutase family. GpmB subfamily.

It carries out the reaction (2R)-2-phosphoglycerate = (2R)-3-phosphoglycerate. Its pathway is carbohydrate degradation; glycolysis; pyruvate from D-glyceraldehyde 3-phosphate: step 3/5. In Escherichia fergusonii (strain ATCC 35469 / DSM 13698 / CCUG 18766 / IAM 14443 / JCM 21226 / LMG 7866 / NBRC 102419 / NCTC 12128 / CDC 0568-73), this protein is Probable phosphoglycerate mutase GpmB.